Here is a 316-residue protein sequence, read N- to C-terminus: Oligopeptide transport system permease protein AppB (316 aa).

A run of 6 helical transmembrane segments spans residues 10–30, 100–120, 138–158, 177–197, 240–260, and 290–310; these read LMSI…MKAA, LLLM…FGVL, FIGL…VLSV, IFDR…ADMA, LPVI…SVVV, and VISA…YAIV. The ABC transmembrane type-1 domain maps to 96-303; the sequence is LPNTLLLMLV…VLVVVGNLIA (208 aa).

Belongs to the binding-protein-dependent transport system permease family. OppBC subfamily.

The protein resides in the cell membrane. Its function is as follows. This protein is a component of an oligopeptide permease, a binding protein-dependent transport system. This APP system can completely substitute for the OPP system in both sporulation and genetic competence, though, unlike OPP, is incapable of transporting tripeptides. Probably responsible for the translocation of the substrate across the membrane. This Bacillus subtilis (strain 168) protein is Oligopeptide transport system permease protein AppB (appB).